The primary structure comprises 394 residues: G2/mitotic-specific cyclin-B (394 aa).

The segment at 360 to 394 (QSHPSPNSRLDQEEDMASSKFMSDQQATQELKSIR) is disordered. The span at 379–394 (KFMSDQQATQELKSIR) shows a compositional bias: polar residues.

This sequence belongs to the cyclin family. Cyclin AB subfamily. As to quaternary structure, interacts with the CDK1 protein kinase to form a serine/threonine kinase holoenzyme complex also known as maturation promoting factor (MPF). The cyclin subunit imparts substrate specificity to the complex.

Essential for the control of the cell cycle at the G2/M (mitosis) transition. The protein is G2/mitotic-specific cyclin-B of Patiria pectinifera (Starfish).